Here is a 422-residue protein sequence, read N- to C-terminus: UDP-N-acetylmuramoylalanine--D-glutamate ligase (422 aa).

Residue Gly102–Thr108 participates in ATP binding.

This sequence belongs to the MurCDEF family.

Its subcellular location is the cytoplasm. It carries out the reaction UDP-N-acetyl-alpha-D-muramoyl-L-alanine + D-glutamate + ATP = UDP-N-acetyl-alpha-D-muramoyl-L-alanyl-D-glutamate + ADP + phosphate + H(+). It participates in cell wall biogenesis; peptidoglycan biosynthesis. Its function is as follows. Cell wall formation. Catalyzes the addition of glutamate to the nucleotide precursor UDP-N-acetylmuramoyl-L-alanine (UMA). The chain is UDP-N-acetylmuramoylalanine--D-glutamate ligase from Helicobacter pylori (strain HPAG1).